Reading from the N-terminus, the 115-residue chain is Putative gamma-glutamylcyclotransferase VC_2546 (115 aa).

Position 8–11 (tyrosine 8–leucine 11) interacts with substrate. Glutamate 73 acts as the Proton acceptor in catalysis.

The protein belongs to the gamma-glutamylcyclotransferase family.

Its function is as follows. Putative gamma-glutamylcyclotransferase. This Vibrio cholerae serotype O1 (strain ATCC 39315 / El Tor Inaba N16961) protein is Putative gamma-glutamylcyclotransferase VC_2546.